The chain runs to 260 residues: Acidic leucine-rich nuclear phosphoprotein 32 family member E (260 aa).

Met-1 is modified (N-acetylmethionine). LRR repeat units follow at residues 18 to 38 (EVTE…EGLN), 43 to 64 (ELEF…PSLN), 65 to 87 (KLRK…AEKC), and 89 to 110 (NLTY…EALQ). Residue Lys-68 forms a Glycyl lysine isopeptide (Lys-Gly) (interchain with G-Cter in SUMO2) linkage. One can recognise an LRRCT domain in the interval 123-161 (CEITNLEDYRESIFELLQQITYLDGFDQEDNEAPDSEEE). Composition is skewed to acidic residues over residues 149-208 (DQED…EEEV) and 218-240 (IQDE…EEEE). The segment at 149 to 260 (DQEDNEAPDS…AEDDGEEDDD (112 aa)) is disordered. Residues 207–260 (EVGLSYLMKDEIQDEEDDDDYVDEGEEEEEEEEEGLRGEKRKRDAEDDGEEDDD) are ZID domain. A compositionally biased stretch (basic and acidic residues) spans 241-251 (GLRGEKRKRDA).

The protein belongs to the ANP32 family. In terms of assembly, component of a SWR1-like complex, composed of EP400, KAT5/TIP60, TRRAP, BRD8, RUVBL1, RUVBL2, ING3 and ANP32E; the complex does not contain SRCAP. Interacts with H2A.Z/H2AZ1. Interacts with the importin alpha KPNA1 and KPNA2. In terms of processing, phosphorylated. The phosphorylation is nuclear localization signal (NLS)-dependent. Expressed at highest levels in cerebellum and spleen. In the cerebellum, expressed mainly in granule cells and, to a lesser extent, in Purkinje cells.

It localises to the cytoplasm. The protein resides in the nucleus. Its function is as follows. Histone chaperone that specifically mediates the genome-wide removal of histone H2A.Z/H2AZ1 from the nucleosome: removes H2A.Z/H2AZ1 from its normal sites of deposition, especially from enhancer and insulator regions. Not involved in deposition of H2A.Z/H2AZ1 in the nucleosome. May stabilize the evicted H2A.Z/H2AZ1-H2B dimer, thus shifting the equilibrium towards dissociation and the off-chromatin state. Inhibits activity of protein phosphatase 2A (PP2A). Does not inhibit protein phosphatase 1. May play a role in cerebellar development and synaptogenesis. This chain is Acidic leucine-rich nuclear phosphoprotein 32 family member E (Anp32e), found in Mus musculus (Mouse).